The chain runs to 371 residues: Carnitine monooxygenase oxygenase subunit (371 aa).

Residues 44–152 enclose the Rieske domain; sequence WICVAHSSEL…VEEYAGFLFI (109 aa). The [2Fe-2S] cluster site is built by Cys-86, His-88, Cys-106, and His-109. 3 residues coordinate Fe cation: His-208, His-213, and Asp-323.

This sequence belongs to the bacterial ring-hydroxylating dioxygenase alpha subunit family. CntA subfamily. In terms of assembly, composed of an oxygenase subunit (cntA) and a reductase subunit (cntB). Requires [2Fe-2S] cluster as cofactor. The cofactor is Fe cation.

The catalysed reaction is (R)-carnitine + NADH + O2 + H(+) = (3R)-3-hydroxy-4-oxobutanoate + trimethylamine + NAD(+) + H2O. The enzyme catalyses (R)-carnitine + NADPH + O2 + H(+) = (3R)-3-hydroxy-4-oxobutanoate + trimethylamine + NADP(+) + H2O. Its pathway is amine and polyamine metabolism; carnitine metabolism. Functionally, converts carnitine to trimethylamine and malic semialdehyde. The chain is Carnitine monooxygenase oxygenase subunit from Acinetobacter baumannii (strain ATCC 19606 / DSM 30007 / JCM 6841 / CCUG 19606 / CIP 70.34 / NBRC 109757 / NCIMB 12457 / NCTC 12156 / 81).